A 116-amino-acid polypeptide reads, in one-letter code: Transcription elongation factor SPT4 homolog 2 (116 aa).

The segment at 19–39 adopts a C4-type zinc-finger fold; it reads CLRCRLVKTYDQFRDAGCENC.

The protein belongs to the SPT4 family.

Its subcellular location is the nucleus. Functionally, may regulate transcription elongation by RNA polymerase II. May enhance transcriptional pausing at sites proximal to the promoter, which may in turn facilitate the assembly of an elongation competent RNA polymerase II complex. This is Transcription elongation factor SPT4 homolog 2 from Arabidopsis thaliana (Mouse-ear cress).